Here is a 293-residue protein sequence, read N- to C-terminus: NAD kinase (293 aa).

Catalysis depends on Asp68, which acts as the Proton acceptor. Residues 68–69 (DG), 142–143 (ND), Arg153, Asp172, and 183–188 (TAYSLS) each bind NAD(+).

It belongs to the NAD kinase family. Requires a divalent metal cation as cofactor.

The protein localises to the cytoplasm. The catalysed reaction is NAD(+) + ATP = ADP + NADP(+) + H(+). Its function is as follows. Involved in the regulation of the intracellular balance of NAD and NADP, and is a key enzyme in the biosynthesis of NADP. Catalyzes specifically the phosphorylation on 2'-hydroxyl of the adenosine moiety of NAD to yield NADP. This Lachnospira eligens (strain ATCC 27750 / DSM 3376 / VPI C15-48 / C15-B4) (Eubacterium eligens) protein is NAD kinase.